A 375-amino-acid polypeptide reads, in one-letter code: Nucleosome assembly protein 1-like 4 (375 aa).

Residues 1–31 (MADHSFSDGVPSDSVEAAKNASNTEKLTDQV) form a disordered region. Ala-2 is subject to N-acetylalanine. Phosphoserine is present on residues Ser-5, Ser-7, and Ser-12. Polar residues predominate over residues 20 to 31 (NASNTEKLTDQV). Thr-51 is modified (phosphothreonine). Phosphoserine is present on residues Ser-53 and Ser-54. Thr-58 carries the phosphothreonine modification. An N6-acetyllysine modification is found at Lys-105. Residues 116 to 137 (PTDAESEWHSENEEEEKLAGDM) form a disordered region. Positions 121–137 (SEWHSENEEEEKLAGDM) are enriched in basic and acidic residues. Ser-125 is subject to Phosphoserine. Lys-146 is subject to N6-acetyllysine. The Nuclear localization signal signature appears at 265-271 (IKKKQKH). Residue Ser-304 is modified to Phosphoserine. Positions 339–375 (AIEDDDNFEEGEEGEEEELEGDEEGEDEDDAEINPKV) are disordered.

It belongs to the nucleosome assembly protein (NAP) family. Interacts with core (H2A, CD2APH2B, H3, H4) and linker (H1) histones. As to quaternary structure, (Microbial infection) Interacts with Chikungunya virus non-structural protein 3 (via C-terminus). Post-translationally, phosphorylated at the G0/G1 boundary but it is not phosphorylated in S-phase. Phosphorylated protein remains in the cytoplasm in a complex with histones during the G0/G1 transition, whereas dephosphorylation triggers its transport into the nucleus at the G1/S-boundary. Polyglutamylated by TTLL4, a modification that occurs exclusively on glutamate residues and results in polyglutamate chains on the gamma-carboxyl group. Some residues may also be monoglycylated but not polyglycylated due to the absence of functional TTLL10 in human. As to expression, ubiquitous. Biallelically expressed in fetal and adult tissues. Highest levels in testis.

It is found in the nucleus. The protein localises to the cytoplasm. Its function is as follows. Acts as a histone chaperone in nucleosome assembly. This is Nucleosome assembly protein 1-like 4 from Homo sapiens (Human).